The primary structure comprises 189 residues: Peptidyl-tRNA hydrolase (189 aa).

Tyr-15 is a binding site for tRNA. His-20 serves as the catalytic Proton acceptor. TRNA is bound by residues Phe-66, Asn-68, and Asn-114.

It belongs to the PTH family. As to quaternary structure, monomer.

Its subcellular location is the cytoplasm. The enzyme catalyses an N-acyl-L-alpha-aminoacyl-tRNA + H2O = an N-acyl-L-amino acid + a tRNA + H(+). Hydrolyzes ribosome-free peptidyl-tRNAs (with 1 or more amino acids incorporated), which drop off the ribosome during protein synthesis, or as a result of ribosome stalling. In terms of biological role, catalyzes the release of premature peptidyl moieties from peptidyl-tRNA molecules trapped in stalled 50S ribosomal subunits, and thus maintains levels of free tRNAs and 50S ribosomes. This is Peptidyl-tRNA hydrolase from Streptococcus gordonii (strain Challis / ATCC 35105 / BCRC 15272 / CH1 / DL1 / V288).